Reading from the N-terminus, the 290-residue chain is tRNA-cytidine(32) 2-sulfurtransferase (290 aa).

Residues 36–41 (SGGKDS) carry the PP-loop motif motif. The [4Fe-4S] cluster site is built by Cys111, Cys114, and Cys202. The segment at 259–290 (DPWLDAEDEEAEDCGEPAGDGVVSLGGARGGR) is disordered. Residues 262 to 273 (LDAEDEEAEDCG) are compositionally biased toward acidic residues.

It belongs to the TtcA family. As to quaternary structure, homodimer. Mg(2+) is required as a cofactor. It depends on [4Fe-4S] cluster as a cofactor.

The protein localises to the cytoplasm. The catalysed reaction is cytidine(32) in tRNA + S-sulfanyl-L-cysteinyl-[cysteine desulfurase] + AH2 + ATP = 2-thiocytidine(32) in tRNA + L-cysteinyl-[cysteine desulfurase] + A + AMP + diphosphate + H(+). Its pathway is tRNA modification. Its function is as follows. Catalyzes the ATP-dependent 2-thiolation of cytidine in position 32 of tRNA, to form 2-thiocytidine (s(2)C32). The sulfur atoms are provided by the cysteine/cysteine desulfurase (IscS) system. In Anaeromyxobacter dehalogenans (strain 2CP-C), this protein is tRNA-cytidine(32) 2-sulfurtransferase.